A 290-amino-acid polypeptide reads, in one-letter code: Ribosomal RNA small subunit methyltransferase A (290 aa).

S-adenosyl-L-methionine-binding residues include Asn-27, Leu-29, Gly-54, Glu-75, Asp-100, and Asn-125.

The protein belongs to the class I-like SAM-binding methyltransferase superfamily. rRNA adenine N(6)-methyltransferase family. RsmA subfamily.

The protein resides in the cytoplasm. The catalysed reaction is adenosine(1518)/adenosine(1519) in 16S rRNA + 4 S-adenosyl-L-methionine = N(6)-dimethyladenosine(1518)/N(6)-dimethyladenosine(1519) in 16S rRNA + 4 S-adenosyl-L-homocysteine + 4 H(+). In terms of biological role, specifically dimethylates two adjacent adenosines (A1518 and A1519) in the loop of a conserved hairpin near the 3'-end of 16S rRNA in the 30S particle. May play a critical role in biogenesis of 30S subunits. The protein is Ribosomal RNA small subunit methyltransferase A of Streptococcus uberis (strain ATCC BAA-854 / 0140J).